The primary structure comprises 184 residues: Mediator of RNA polymerase II transcription subunit 28 (184 aa).

The stretch at 77-105 forms a coiled coil; it reads LLKEENFDLKQEIARKDELIRKHYEKIES.

The protein belongs to the Mediator complex subunit 28 family. In terms of assembly, component of the Mediator complex.

The protein localises to the nucleus. Its function is as follows. Component of the Mediator complex, a coactivator involved in the regulated transcription of nearly all RNA polymerase II-dependent genes. Mediator functions as a bridge to convey information from gene-specific regulatory proteins to the basal RNA polymerase II transcription machinery. Mediator is recruited to promoters by direct interactions with regulatory proteins and serves as a scaffold for the assembly of a functional preinitiation complex with RNA polymerase II and the general transcription factors. This chain is Mediator of RNA polymerase II transcription subunit 28 (MED28), found in Aedes aegypti (Yellowfever mosquito).